We begin with the raw amino-acid sequence, 79 residues long: Small ribosomal subunit protein uS17 (79 aa).

The protein belongs to the universal ribosomal protein uS17 family. Part of the 30S ribosomal subunit.

One of the primary rRNA binding proteins, it binds specifically to the 5'-end of 16S ribosomal RNA. The polypeptide is Small ribosomal subunit protein uS17 (Bartonella tribocorum (strain CIP 105476 / IBS 506)).